The chain runs to 214 residues: Adenylate kinase (214 aa).

11-16 contacts ATP; the sequence is GTGKGT. The segment at 31 to 61 is NMP; the sequence is SSGDLFRFYAKEEKTALAEEIKSYINNGLYV. AMP contacts are provided by residues S32, R37, 59-61, 87-90, and Q94; these read LYV and GYPR. The LID stretch occupies residues 124–163; that stretch reads LRRSCPQCKRIYNINSVDFKPKVANLCDLCKVELIHRKDD. Residue R125 coordinates ATP. The Zn(2+) site is built by C128 and C131. Residue 134-135 participates in ATP binding; the sequence is IY. Zn(2+) is bound by residues C150 and C153. AMP-binding residues include R160 and R171. K199 is a binding site for ATP.

Belongs to the adenylate kinase family. In terms of assembly, monomer.

It localises to the cytoplasm. It carries out the reaction AMP + ATP = 2 ADP. The protein operates within purine metabolism; AMP biosynthesis via salvage pathway; AMP from ADP: step 1/1. Functionally, catalyzes the reversible transfer of the terminal phosphate group between ATP and AMP. Plays an important role in cellular energy homeostasis and in adenine nucleotide metabolism. This Mycoplasmoides gallisepticum (strain R(low / passage 15 / clone 2)) (Mycoplasma gallisepticum) protein is Adenylate kinase.